Reading from the N-terminus, the 336-residue chain is NADH-quinone oxidoreductase subunit H (336 aa).

8 helical membrane passes run 4–24, 75–95, 108–128, 154–174, 181–201, 233–253, 272–292, and 308–328; these read YILWTSLYVLLIVIPLILVVA, YLFFIAPILAFAPAYAAWAVI, LGLLYILAMTSFSIYGIVIAG, MGFAIVGVVIAAGSMGITGII, IWHWYFIPLFPLFIVYFIAGI, LFFLAEYANMILISILTSIMF, FVPGVVWLFAKTGIFMFMFLW, and LGWKIFIPLTFVWVVIVACMV.

It belongs to the complex I subunit 1 family. In terms of assembly, NDH-1 is composed of 14 different subunits. Subunits NuoA, H, J, K, L, M, N constitute the membrane sector of the complex.

The protein localises to the cell inner membrane. It carries out the reaction a quinone + NADH + 5 H(+)(in) = a quinol + NAD(+) + 4 H(+)(out). Functionally, NDH-1 shuttles electrons from NADH, via FMN and iron-sulfur (Fe-S) centers, to quinones in the respiratory chain. The immediate electron acceptor for the enzyme in this species is believed to be ubiquinone. Couples the redox reaction to proton translocation (for every two electrons transferred, four hydrogen ions are translocated across the cytoplasmic membrane), and thus conserves the redox energy in a proton gradient. This subunit may bind ubiquinone. The protein is NADH-quinone oxidoreductase subunit H of Francisella tularensis subsp. tularensis (strain FSC 198).